Consider the following 56-residue polypeptide: Large ribosomal subunit protein bL32 (56 aa).

The span at 1–16 shows a compositional bias: basic residues; sequence MAVQKSKKSRSMRGMR. Residues 1-33 are disordered; it reads MAVQKSKKSRSMRGMRRSHDALTTSAVSVDATS. The segment covering 21 to 33 has biased composition (polar residues); sequence ALTTSAVSVDATS.

It belongs to the bacterial ribosomal protein bL32 family.

In Aliivibrio fischeri (strain ATCC 700601 / ES114) (Vibrio fischeri), this protein is Large ribosomal subunit protein bL32.